The primary structure comprises 537 residues: Glutamyl-tRNA(Gln) amidotransferase subunit A, chloroplastic/mitochondrial (537 aa).

Catalysis depends on charge relay system residues lysine 116 and serine 191. The Acyl-ester intermediate role is filled by serine 215.

The protein belongs to the amidase family. GatA subfamily. Subunit of the heterotrimeric GatCAB amidotransferase (AdT) complex, composed of A, B and C subunits.

It is found in the mitochondrion. It localises to the plastid. Its subcellular location is the chloroplast stroma. It catalyses the reaction L-glutamyl-tRNA(Gln) + L-glutamine + ATP + H2O = L-glutaminyl-tRNA(Gln) + L-glutamate + ADP + phosphate + H(+). Allows the formation of correctly charged Gln-tRNA(Gln) through the transamidation of misacylated Glu-tRNA(Gln) in chloroplasts and mitochondria. The reaction takes place in the presence of glutamine and ATP through an activated gamma-phospho-Glu-tRNA(Gln). In Arabidopsis thaliana (Mouse-ear cress), this protein is Glutamyl-tRNA(Gln) amidotransferase subunit A, chloroplastic/mitochondrial.